We begin with the raw amino-acid sequence, 262 residues long: Thrombin-like enzyme gyroxin B1.4 (262 aa).

The N-terminal stretch at 1 to 18 (MVLIRVLANLLILQLSYA) is a signal peptide. Positions 19 to 262 (QKSSELVIGG…AGNTIVNCPP (244 aa)) are excised as a propeptide. A Peptidase S1 domain is found at 25–253 (VIGGDECNIN…HLDWIQSIIA (229 aa)). Intrachain disulfides connect Cys31–Cys165, Cys52–Cys68, Cys102–Cys260, Cys144–Cys214, Cys176–Cys193, and Cys204–Cys229. His67 functions as the Charge relay system in the catalytic mechanism. Asn105 is a glycosylation site (N-linked (GlcNAc...) asparagine). Asp112 functions as the Charge relay system in the catalytic mechanism. Catalysis depends on Ser208, which acts as the Charge relay system.

This sequence belongs to the peptidase S1 family. Snake venom subfamily. In terms of assembly, monomer. As to expression, expressed by the venom gland.

The protein resides in the secreted. Its function is as follows. Thrombin-like snake venom serine protease. Displays a specificity similar to trypsin. Releases only fibrinopeptide A in the conversion of fibrinogen to fibrin. Shows coagulant, esterase and amidase activities. Reversibly increases the permeability of the blood brain barrier (BBB) in mice. Induces the barrel rotation syndrome in mice, which is manifested by gyroxin-like, rapid rolling motions. This syndrome may be due to its effect on BBB permeability, and certainly also to other actions affecting endogenous substrates present in the endothelium, nervous tissues or blood. The protein is Thrombin-like enzyme gyroxin B1.4 of Crotalus durissus terrificus (South American rattlesnake).